A 121-amino-acid polypeptide reads, in one-letter code: Spermidine export protein MdtJ (121 aa).

Met-1 is a topological domain (cytoplasmic). A helical membrane pass occupies residues 2-22 (YIYWILLGLAVATEITGTLSM). At 23–31 (KWASVSEGN) the chain is on the periplasmic side. A helical transmembrane segment spans residues 32–52 (GGFILMLVMISLSYIFLSFAV). The Cytoplasmic segment spans residues 53–54 (KK). The helical transmembrane segment at 55-75 (IALGVAYALWEGIGILFITLF) threads the bilayer. Residues 76-81 (SVLLFD) lie on the Periplasmic side of the membrane. Residues 82–102 (ESLSLMKIAGLTTLVAGIVLI) form a helical membrane-spanning segment. The Cytoplasmic segment spans residues 103–121 (KSGTRKARKPELEVNHGAV).

The protein belongs to the drug/metabolite transporter (DMT) superfamily. Small multidrug resistance (SMR) (TC 2.A.7.1) family. MdtJ subfamily. Forms a complex with MdtI.

The protein localises to the cell inner membrane. Its function is as follows. Catalyzes the excretion of spermidine. In Escherichia coli O6:H1 (strain CFT073 / ATCC 700928 / UPEC), this protein is Spermidine export protein MdtJ (mdtJ).